We begin with the raw amino-acid sequence, 166 residues long: Ubiquitin-conjugating enzyme E2 7 (166 aa).

Ala-2 bears the N-acetylalanine mark. Residues Gln-4–Glu-164 form the UBC core domain. The active-site Glycyl thioester intermediate is the Cys-89.

It belongs to the ubiquitin-conjugating enzyme family.

The enzyme catalyses S-ubiquitinyl-[E1 ubiquitin-activating enzyme]-L-cysteine + [E2 ubiquitin-conjugating enzyme]-L-cysteine = [E1 ubiquitin-activating enzyme]-L-cysteine + S-ubiquitinyl-[E2 ubiquitin-conjugating enzyme]-L-cysteine.. The protein operates within protein modification; protein ubiquitination. In terms of biological role, accepts the ubiquitin from the E1 complex and catalyzes its covalent attachment to other proteins. Involved in the formation of multiubiquitin chains. Signal the protein for selective degradation. This chain is Ubiquitin-conjugating enzyme E2 7 (UBC7), found in Arabidopsis thaliana (Mouse-ear cress).